The primary structure comprises 324 residues: Signal peptidase I (324 aa).

M1 is modified (blocked amino end (Met)). Residues 1 to 3 lie on the Periplasmic side of the membrane; sequence MAN. The chain crosses the membrane as a helical span at residues 4-22; it reads MFALILVIATLVTGILWCV. Residues 23 to 58 lie on the Cytoplasmic side of the membrane; it reads DKFFFAPKRRERQAAAQAAAGDSLDKATLKKVAPKP. The chain crosses the membrane as a helical span at residues 59 to 77; the sequence is GWLETGASVFPVLAIVLIV. Residues 78-324 lie on the Periplasmic side of the membrane; that stretch reads RSFIYEPFQI…LRLSRIGGIH (247 aa). Catalysis depends on residues S91 and K146. C171 and C177 form a disulfide bridge.

This sequence belongs to the peptidase S26 family.

It is found in the cell inner membrane. The enzyme catalyses Cleavage of hydrophobic, N-terminal signal or leader sequences from secreted and periplasmic proteins.. This Escherichia coli (strain K12) protein is Signal peptidase I (lepB).